Consider the following 232-residue polypeptide: Large ribosomal subunit protein uL1 (232 aa).

It belongs to the universal ribosomal protein uL1 family. Part of the 50S ribosomal subunit.

Binds directly to 23S rRNA. The L1 stalk is quite mobile in the ribosome, and is involved in E site tRNA release. Functionally, protein L1 is also a translational repressor protein, it controls the translation of the L11 operon by binding to its mRNA. The polypeptide is Large ribosomal subunit protein uL1 (Azobacteroides pseudotrichonymphae genomovar. CFP2).